A 711-amino-acid polypeptide reads, in one-letter code: Arginine decarboxylase 2 (711 aa).

The residue at position 147 (lysine 147) is an N6-(pyridoxal phosphate)lysine. 331-341 serves as a coordination point for substrate; the sequence is IDIGGGLGIDY. Residues 642-661 are disordered; the sequence is MHTKGGSEGENEEEEEDDEF. The span at 650-661 shows a compositional bias: acidic residues; it reads GENEEEEEDDEF.

Belongs to the Orn/Lys/Arg decarboxylase class-II family. SpeA subfamily. As to quaternary structure, homodimer and heterodimer with ADC1. Pyridoxal 5'-phosphate is required as a cofactor. It depends on Mg(2+) as a cofactor.

It localises to the plastid. The protein localises to the chloroplast. The protein resides in the cytoplasm. Its subcellular location is the cytosol. It catalyses the reaction L-arginine + H(+) = agmatine + CO2. It functions in the pathway amine and polyamine biosynthesis; agmatine biosynthesis; agmatine from L-arginine: step 1/1. In terms of biological role, required for the biosynthesis of putrescine. Catalyzes the first step of polyamine (PA) biosynthesis to produce putrescine from arginine. Is a major contributor to basal arginine decarboxylase (ADC) activity and putrescine biosynthesis. Accumulation of putrescine plays a positive role in salt stress tolerance. Accumulation of putrescine plays a positive role in freezing tolerance. Production of PA is essential for normal seed development. Controls PA homeostasis which is crucial for normal plant growth and development. The protein is Arginine decarboxylase 2 of Arabidopsis thaliana (Mouse-ear cress).